The primary structure comprises 328 residues: Endo-beta-1,4-glucanase B (328 aa).

A signal peptide spans 1-17; that stretch reads MKVNTLLVAVAAGTAMA. Asparagine 95 is a glycosylation site (N-linked (GlcNAc...) asparagine). The active-site Proton donor is glutamate 155. The Nucleophile role is filled by glutamate 262.

Belongs to the glycosyl hydrolase 5 (cellulase A) family.

Its subcellular location is the secreted. The catalysed reaction is Endohydrolysis of (1-&gt;4)-beta-D-glucosidic linkages in cellulose, lichenin and cereal beta-D-glucans.. In terms of biological role, has endoglucanase activity on substrates containing beta-1,4 glycosidic bonds, like in carboxymethylcellulose (CMC), hydroxyethylcellulose (HEC) and beta-glucan. Involved in the degradation of complex natural cellulosic substrates. The chain is Endo-beta-1,4-glucanase B (eglB) from Emericella nidulans (strain FGSC A4 / ATCC 38163 / CBS 112.46 / NRRL 194 / M139) (Aspergillus nidulans).